The primary structure comprises 283 residues: MKYVGAHVSAAGGVENAPLAAARIRARAFALFTKNQRQWRAAPLKEESITAFKRNCADHGYRPDHILPHDSYLINLGHPEADNLKKSRTAFFDEMKRCEQLGLKFLNFHPGSHLGKISEDACLSRIAESVNMALDRTASVCAVIENTAGQGTNLGHRFEHLARVIDQVEDKTRVGVCLDTCHTFAAGYDLRTASTYEATLKAFDRVVGLKYLRAVHLNDSIKGLASRVDRHQSLGQGALGLDVFRRIMNDRRFENMPLILETKDATIWEQEIKLLYGMIKGAK.

Zn(2+)-binding residues include His-69, His-109, Glu-145, Asp-179, His-182, His-216, Asp-229, His-231, and Glu-261.

The protein belongs to the AP endonuclease 2 family. Requires Zn(2+) as cofactor.

The catalysed reaction is Endonucleolytic cleavage to 5'-phosphooligonucleotide end-products.. Functionally, endonuclease IV plays a role in DNA repair. It cleaves phosphodiester bonds at apurinic or apyrimidinic (AP) sites, generating a 3'-hydroxyl group and a 5'-terminal sugar phosphate. This is Probable endonuclease 4 from Desulfosudis oleivorans (strain DSM 6200 / JCM 39069 / Hxd3) (Desulfococcus oleovorans).